Here is a 1235-residue protein sequence, read N- to C-terminus: ATP-dependent helicase/nuclease subunit A (1235 aa).

The UvrD-like helicase ATP-binding domain occupies 12-482; the sequence is TLWTDDQWKA…IDLSQNFRSR (471 aa). ATP is bound at residue 33 to 40; it reads AAAGSGKT. The UvrD-like helicase C-terminal domain occupies 509-800; sequence AAELTLGANF…RMMTIHASKG (292 aa).

Belongs to the helicase family. AddA subfamily. Heterodimer of AddA and AddB/RexB. It depends on Mg(2+) as a cofactor.

The catalysed reaction is Couples ATP hydrolysis with the unwinding of duplex DNA by translocating in the 3'-5' direction.. The enzyme catalyses ATP + H2O = ADP + phosphate + H(+). The heterodimer acts as both an ATP-dependent DNA helicase and an ATP-dependent, dual-direction single-stranded exonuclease. Recognizes the chi site generating a DNA molecule suitable for the initiation of homologous recombination. The AddA nuclease domain is required for chi fragment generation; this subunit has the helicase and 3' -&gt; 5' nuclease activities. This Listeria welshimeri serovar 6b (strain ATCC 35897 / DSM 20650 / CCUG 15529 / CIP 8149 / NCTC 11857 / SLCC 5334 / V8) protein is ATP-dependent helicase/nuclease subunit A.